Consider the following 128-residue polypeptide: Pi-hexatoxin-Hi1c (128 aa).

The first 19 residues, methionine 1–glycine 19, serve as a signal peptide directing secretion. The propeptide occupies aspartate 20 to arginine 47. 6 disulfide bridges follow: cysteine 54–cysteine 69, cysteine 61–cysteine 74, cysteine 68–cysteine 84, cysteine 93–cysteine 108, cysteine 100–cysteine 113, and cysteine 107–cysteine 124. 2 Domain repeats span residues cysteine 54–cysteine 84 and cysteine 93–cysteine 124. The interval cysteine 54–cysteine 124 is 2 X approximate repeats with cysteine pattern C-C-CC-C-C.

Belongs to the psalmotoxin-1 family. Double-knot toxin subfamily. In terms of tissue distribution, expressed by the venom gland.

It localises to the secreted. In terms of biological role, this toxin potently and selectively inhibits ASIC1a, an isoform of the gene ASIC1. It incompletely inhibits ASIC1a activation in a pH-independent and slowly reversible manner. This toxin acts by binding to and stabilizing the closed state of the channel, thereby impeding the transition into a conducting state. This toxin may bind to the acidic pocket of ASIC1a, since mutation of a key residue of this pocket (Arg-350) abolishes the ability of the toxin to inhibit ASIC1a. In vivo, this toxin protects the brain from neuronal injury when administered up to 8 hours after stroke onset. The chain is Pi-hexatoxin-Hi1c from Hadronyche infensa (Fraser island funnel-web spider).